A 199-amino-acid chain; its full sequence is Inner membrane-spanning protein YciB (199 aa).

Helical transmembrane passes span 3–23 (LLID…WGIY), 47–67 (VEPM…ATLL), 76–96 (WKPS…QLVF), 119–139 (LNWS…VIAY), and 149–169 (FKLF…AIYM). The tract at residues 180 to 199 (AAAATPDALPPPGVQQDKQP) is disordered.

This sequence belongs to the YciB family.

It is found in the cell inner membrane. Its function is as follows. Plays a role in cell envelope biogenesis, maintenance of cell envelope integrity and membrane homeostasis. In Delftia acidovorans (strain DSM 14801 / SPH-1), this protein is Inner membrane-spanning protein YciB.